The sequence spans 322 residues: Malate dehydrogenase 1 (322 aa).

Residues 10–15 (GSGQIG) and Asp-34 each bind NAD(+). Residues Arg-83 and Arg-89 each contribute to the substrate site. Residues Asn-96 and 119–121 (ITN) contribute to the NAD(+) site. Residues Asn-121 and Arg-152 each coordinate substrate. The Proton acceptor role is filled by His-176.

This sequence belongs to the LDH/MDH superfamily. MDH type 3 family.

It carries out the reaction (S)-malate + NAD(+) = oxaloacetate + NADH + H(+). In terms of biological role, catalyzes the reversible oxidation of malate to oxaloacetate. This Rhodopseudomonas palustris (strain BisB18) protein is Malate dehydrogenase 1.